The primary structure comprises 102 residues: NADH-quinone oxidoreductase subunit K (102 aa).

3 helical membrane-spanning segments follow: residues leucine 6–alanine 26, isoleucine 30–alanine 50, and methionine 63–leucine 83.

It belongs to the complex I subunit 4L family. As to quaternary structure, NDH-1 is composed of 14 different subunits. Subunits NuoA, H, J, K, L, M, N constitute the membrane sector of the complex.

Its subcellular location is the cell inner membrane. It carries out the reaction a quinone + NADH + 5 H(+)(in) = a quinol + NAD(+) + 4 H(+)(out). Its function is as follows. NDH-1 shuttles electrons from NADH, via FMN and iron-sulfur (Fe-S) centers, to quinones in the respiratory chain. The immediate electron acceptor for the enzyme in this species is believed to be ubiquinone. Couples the redox reaction to proton translocation (for every two electrons transferred, four hydrogen ions are translocated across the cytoplasmic membrane), and thus conserves the redox energy in a proton gradient. The polypeptide is NADH-quinone oxidoreductase subunit K (Rhodopseudomonas palustris (strain BisB5)).